The sequence spans 290 residues: Zinc finger matrin-type protein 3 (290 aa).

Matrin-type zinc fingers lie at residues 70–100 (LFCKLCNVTLNSAQQAQAHYQGKNHGKKLRN) and 148–178 (DYCKLCDASFSSPAVAQAHYQGKNHAKRLRL). Disordered stretches follow at residues 182–203 (QSHSFSDSAEAGQRRTRKEGSE) and 266–290 (ESKQHKSKVSEQRYRSEMENLGYVQ). Residues 246 to 276 (FYCSMCNVGAGEEVEFRQHLESKQHKSKVSE) form a Matrin-type 3 zinc finger. Residues 266–283 (ESKQHKSKVSEQRYRSEM) are compositionally biased toward basic and acidic residues.

In terms of assembly, interacts with dsRNA. As to expression, constitutively expressed in brain and testis. Also expressed in lung, kidney and spleen after whole body gamma irradiation.

It localises to the nucleus. The protein resides in the nucleolus. Its function is as follows. Acts as a bona fide target gene of p53/TP53. May play a role in the TP53-dependent growth regulatory pathway. May contribute to TP53-mediated apoptosis by regulation of TP53 expression and translocation to the nucleus and nucleolus. This Mus musculus (Mouse) protein is Zinc finger matrin-type protein 3.